The following is a 391-amino-acid chain: Terminal nucleotidyltransferase 5C (391 aa).

It belongs to the TENT family. As to quaternary structure, interacts with BCCIP and PABPC1; the interaction has no effect on TENT5C poly(A) polymerase function. Interacts with PLK4; this interaction leads to the TENT5C recruitment into the centrosome. In terms of tissue distribution, expressed by splenocytes, expression is increased in activated splenocytes.

Its subcellular location is the nucleus. It is found in the cytoplasm. It localises to the cytoskeleton. The protein resides in the microtubule organizing center. The protein localises to the centrosome. The catalysed reaction is RNA(n) + ATP = RNA(n)-3'-adenine ribonucleotide + diphosphate. In terms of biological role, catalyzes the transfer of one adenosine molecule from an ATP to an mRNA poly(A) tail bearing a 3'-OH terminal group and enhances mRNA stability and gene expression. Can also elongate RNA oligos ending with uridine molecule, provided that the sequence is adenosine-rich. Mainly targets mRNAs encoding endoplasmic reticulum-targeted protein. This is Terminal nucleotidyltransferase 5C from Mus musculus (Mouse).